We begin with the raw amino-acid sequence, 100 residues long: Large ribosomal subunit protein bL21 (100 aa).

It belongs to the bacterial ribosomal protein bL21 family. In terms of assembly, part of the 50S ribosomal subunit. Contacts protein L20.

In terms of biological role, this protein binds to 23S rRNA in the presence of protein L20. This chain is Large ribosomal subunit protein bL21, found in Mycoplasma mycoides subsp. mycoides SC (strain CCUG 32753 / NCTC 10114 / PG1).